We begin with the raw amino-acid sequence, 207 residues long: MPVSAPGPLPTVVEQSGRGDRAFDIYSRLLRERIIFLGTGVDDAVADALVAQMLFLEAEDPEKDIQIYINSPGGSVTAGLAIYDTMQQVAPDVVTICYGLAASMGAFLLSGGTKGKRLALPNARIMIHQPLGGAQGQAVDIEIQAKEILYLKETLNGLMAEHTGQPLDKISEDTDRDYFLSPAEAVEYGLIDRVVDSSGDGGIITES.

S103 acts as the Nucleophile in catalysis. H128 is an active-site residue.

It belongs to the peptidase S14 family. In terms of assembly, fourteen ClpP subunits assemble into 2 heptameric rings which stack back to back to give a disk-like structure with a central cavity, resembling the structure of eukaryotic proteasomes.

It is found in the cytoplasm. It carries out the reaction Hydrolysis of proteins to small peptides in the presence of ATP and magnesium. alpha-casein is the usual test substrate. In the absence of ATP, only oligopeptides shorter than five residues are hydrolyzed (such as succinyl-Leu-Tyr-|-NHMec, and Leu-Tyr-Leu-|-Tyr-Trp, in which cleavage of the -Tyr-|-Leu- and -Tyr-|-Trp bonds also occurs).. In terms of biological role, cleaves peptides in various proteins in a process that requires ATP hydrolysis. Has a chymotrypsin-like activity. Plays a major role in the degradation of misfolded proteins. The chain is ATP-dependent Clp protease proteolytic subunit 1 from Synechococcus sp. (strain CC9605).